The chain runs to 358 residues: Uptake hydrogenase small subunit (358 aa).

Residues 1 to 45 (MSDIETFYDVMRRQGITRRSFMKSVRSPQHVLGLGPSFVPKIGEA) form the signal peptide. The [4Fe-4S] cluster site is built by cysteine 62, cysteine 65, cysteine 160, cysteine 194, histidine 232, cysteine 235, cysteine 260, and cysteine 266. Residues cysteine 275, cysteine 294, and cysteine 297 each contribute to the [3Fe-4S] cluster site.

The protein belongs to the [NiFe]/[NiFeSe] hydrogenase small subunit family. Heterodimer of a large and a small subunit. Requires [4Fe-4S] cluster as cofactor. The cofactor is [3Fe-4S] cluster.

Its subcellular location is the cell membrane. The enzyme catalyses H2 + A = AH2. In terms of biological role, this enzyme recycles the H(2) produced by nitrogenase to increase the production of ATP and to protect nitrogenase against inhibition or damage by O(2) under carbon- or phosphate-limited conditions. This Rhodobacter capsulatus (Rhodopseudomonas capsulata) protein is Uptake hydrogenase small subunit (hupA).